A 476-amino-acid polypeptide reads, in one-letter code: Inactive glucose-1-phosphate adenylyltransferase small subunit 2, chloroplastic (476 aa).

Residues Met1–Val55 constitute a chloroplast transit peptide.

The protein belongs to the bacterial/plant glucose-1-phosphate adenylyltransferase family. In terms of assembly, heterotetramer. In terms of tissue distribution, expressed at very low levels in leaves, inflorescences, fruits, and roots.

It localises to the plastid. The protein resides in the chloroplast. The chain is Inactive glucose-1-phosphate adenylyltransferase small subunit 2, chloroplastic from Arabidopsis thaliana (Mouse-ear cress).